A 427-amino-acid polypeptide reads, in one-letter code: Serine--tRNA ligase (427 aa).

232–234 (TAE) serves as a coordination point for L-serine. 263-265 (RSE) provides a ligand contact to ATP. Residue E286 participates in L-serine binding. 350–353 (EISS) lines the ATP pocket. S385 lines the L-serine pocket.

This sequence belongs to the class-II aminoacyl-tRNA synthetase family. Type-1 seryl-tRNA synthetase subfamily. Homodimer. The tRNA molecule binds across the dimer.

It localises to the cytoplasm. The catalysed reaction is tRNA(Ser) + L-serine + ATP = L-seryl-tRNA(Ser) + AMP + diphosphate + H(+). The enzyme catalyses tRNA(Sec) + L-serine + ATP = L-seryl-tRNA(Sec) + AMP + diphosphate + H(+). It functions in the pathway aminoacyl-tRNA biosynthesis; selenocysteinyl-tRNA(Sec) biosynthesis; L-seryl-tRNA(Sec) from L-serine and tRNA(Sec): step 1/1. Its function is as follows. Catalyzes the attachment of serine to tRNA(Ser). Is also able to aminoacylate tRNA(Sec) with serine, to form the misacylated tRNA L-seryl-tRNA(Sec), which will be further converted into selenocysteinyl-tRNA(Sec). The polypeptide is Serine--tRNA ligase (Lacticaseibacillus casei (strain BL23) (Lactobacillus casei)).